Consider the following 632-residue polypeptide: Nucleoside triphosphatase I (632 aa).

The 163-residue stretch at 42–204 folds into the Helicase ATP-binding domain; the sequence is FLGLDKMHSL…VMLVNLLRPK (163 aa). Residue 55–62 participates in ATP binding; that stretch reads HETGVGKT. The DEXH box signature appears at 141 to 144; the sequence is DECH. Residues 367 to 532 enclose the Helicase C-terminal domain; sequence KFTDVCLRIL…EFTQLFKVFK (166 aa). The tract at residues 457-524 is binding to the cap-specific mRNA (nucleoside-2'-O-)-methyltransferase; sequence DIFILDMTWN…DIIRTKSKEF (68 aa).

The protein belongs to the helicase family. NPH I subfamily. As to quaternary structure, monomer. Interacts (via C-terminus) with RAP94 (via N-terminus). Interacts with the cap-specific mRNA (nucleoside-2'-O-)-methyltransferase.

The protein resides in the virion. It catalyses the reaction a ribonucleoside 5'-triphosphate + H2O = a ribonucleoside 5'-diphosphate + phosphate + H(+). In terms of biological role, DNA-dependent ATPase required for providing the needed energy to achieve the termination of early transcripts. Acts in concert with the RAP94 subunit of the virion RNA polymerase and the capping enzyme/VTF to catalyze release of UUUUUNU-containing nascent RNA from the elongation complex. NPH-I must bind ssDNA in order to exhibit ATPase activity. The chain is Nucleoside triphosphatase I (NPH1) from Myxoma virus (strain Lausanne) (MYXV).